The following is a 315-amino-acid chain: MLEIEKPKIECVERTDDNSYAKFVVEPLERGYGITLGNSLRRILLSSLPGTAVTSVKIEGVLHEFSTVPGVLEDVTDIILNLKSLALKGHTDEPKVLRLEAEGEGVIKAGDIITDADIEILNPDLKIATLDKDGRLFMEMTAERGRGYVSADKNKKPDQAIGIIPIDSIFAPIYKVNYTVEDTRVGMVTDYDKLTLEVWSNGSITPEEATSLAAKILSEHLRLFIGLTDKLNNVEIMVEKEEEAKDKILEMTIEDLDLSVRSYNCLKRAGINSVEELTQKTEEDMIKVRNLGRKSLEEVESKLKELGLGFRKADD.

Positions Met-1–Thr-228 are alpha N-terminal domain (alpha-NTD). Residues Lys-245 to Asp-315 are alpha C-terminal domain (alpha-CTD).

Belongs to the RNA polymerase alpha chain family. As to quaternary structure, homodimer. The RNAP catalytic core consists of 2 alpha, 1 beta, 1 beta' and 1 omega subunit. When a sigma factor is associated with the core the holoenzyme is formed, which can initiate transcription.

The catalysed reaction is RNA(n) + a ribonucleoside 5'-triphosphate = RNA(n+1) + diphosphate. Functionally, DNA-dependent RNA polymerase catalyzes the transcription of DNA into RNA using the four ribonucleoside triphosphates as substrates. In Desulfitobacterium hafniense (strain DSM 10664 / DCB-2), this protein is DNA-directed RNA polymerase subunit alpha.